A 232-amino-acid chain; its full sequence is Esterase YpfH (232 aa).

Residues S111, D159, and H191 each act as charge relay system in the active site.

This sequence belongs to the AB hydrolase superfamily. AB hydrolase 2 family.

Displays esterase activity toward palmitoyl-CoA and pNP-butyrate. The sequence is that of Esterase YpfH (ypfH) from Escherichia coli (strain K12).